We begin with the raw amino-acid sequence, 380 residues long: Cytochrome b (380 aa).

4 helical membrane passes run 34-54 (FGSL…LLAT), 78-99 (WLIR…YLHI), 114-134 (WNTG…GYVL), and 179-199 (FFAL…THLT). Heme b-binding residues include His-84 and His-98. Residues His-183 and His-197 each contribute to the heme b site. His-202 contacts a ubiquinone. A run of 4 helical transmembrane segments spans residues 227 to 247 (PKDL…ALFS), 289 to 309 (LGGV…PFLH), 321 to 341 (LSQL…WVGS), and 348 to 368 (FIII…ILFP).

Belongs to the cytochrome b family. In terms of assembly, the cytochrome bc1 complex contains 11 subunits: 3 respiratory subunits (MT-CYB, CYC1 and UQCRFS1), 2 core proteins (UQCRC1 and UQCRC2) and 6 low-molecular weight proteins (UQCRH/QCR6, UQCRB/QCR7, UQCRQ/QCR8, UQCR10/QCR9, UQCR11/QCR10 and a cleavage product of UQCRFS1). This cytochrome bc1 complex then forms a dimer. Heme b serves as cofactor.

The protein resides in the mitochondrion inner membrane. Its function is as follows. Component of the ubiquinol-cytochrome c reductase complex (complex III or cytochrome b-c1 complex) that is part of the mitochondrial respiratory chain. The b-c1 complex mediates electron transfer from ubiquinol to cytochrome c. Contributes to the generation of a proton gradient across the mitochondrial membrane that is then used for ATP synthesis. The polypeptide is Cytochrome b (MT-CYB) (Todus todus (Jamaican tody)).